We begin with the raw amino-acid sequence, 366 residues long: Cobalt-precorrin-5B C(1)-methyltransferase (366 aa).

This sequence belongs to the CbiD family.

The enzyme catalyses Co-precorrin-5B + S-adenosyl-L-methionine = Co-precorrin-6A + S-adenosyl-L-homocysteine. Its pathway is cofactor biosynthesis; adenosylcobalamin biosynthesis; cob(II)yrinate a,c-diamide from sirohydrochlorin (anaerobic route): step 6/10. In terms of biological role, catalyzes the methylation of C-1 in cobalt-precorrin-5B to form cobalt-precorrin-6A. The protein is Cobalt-precorrin-5B C(1)-methyltransferase of Thermoanaerobacter sp. (strain X514).